The sequence spans 1239 residues: Protein strawberry notch homolog 1 (1239 aa).

The disordered stretch occupies residues 684–837 (AQSNNNSPRD…SANSNTNSSF (154 aa)). Residues 694–713 (SPCKENKIKKRKGEEVSREA) show a composition bias toward basic and acidic residues. Acidic residues predominate over residues 728–744 (DESESESDASDNEESDN). The span at 778–790 (KEHKKVKEKKKKK) shows a compositional bias: basic residues. The span at 814-837 (FTSTVGTTTSSTNASANSNTNSSF) shows a compositional bias: low complexity. Residues 838 to 866 (VTSQDAVERAQQMKKELLDKLEKLAEDLP) adopt a coiled-coil conformation.

The protein belongs to the SBNO family.

It is found in the nucleus. In terms of biological role, plays a crucial role in the regulation of neural stem cells (NSCs) proliferation. Enhances the phosphorylation of GSK3B through the PI3K-Akt signaling pathway, thereby upregulating the Wnt/beta-catenin signaling pathway and promoting the proliferation of NSCs. The chain is Protein strawberry notch homolog 1 (SBNO1) from Gallus gallus (Chicken).